Reading from the N-terminus, the 59-residue chain is uncharacterized protein (59 aa).

This is an uncharacterized protein from Saccharomyces cerevisiae (strain ATCC 204508 / S288c) (Baker's yeast).